A 378-amino-acid chain; its full sequence is Chlorophyll synthase, chloroplastic (378 aa).

Residues 1-45 (MATSHPLAAAAATSSSSATFRPPLRFLSSPPSSLTLNRRRSFPVV) constitute a chloroplast transit peptide. The next 7 membrane-spanning stretches (helical) occupy residues 173 to 193 (VITQ…LLDI), 199 to 219 (FPII…YSAP), 232 to 252 (FALG…LFGT), 257 to 277 (IVVL…VNDF), 302 to 322 (WICV…LLST), 327 to 347 (YALA…QYFL), and 357 to 377 (YQAS…LATS).

The protein belongs to the UbiA prenyltransferase family. Chlorophyll synthase subfamily. It depends on Mg(2+) as a cofactor. Zn(2+) is required as a cofactor. Requires Mn(2+) as cofactor.

It is found in the plastid. The protein resides in the chloroplast membrane. It catalyses the reaction phytyl diphosphate + chlorophyllide a + H(+) = chlorophyll a + diphosphate. With respect to regulation, inhibited by N-phenylmaleimide (NPM) and diacetyl. Functionally, involved in one of the last steps of the biosynthesis of chlorophyll a. Catalyzes the esterification of chlorophillide a with either geranylgeranyldiphosphate (GGPP) or phytyldiphosphate (PhyPP). May also use with a lower efficiency the monophosphates GGMP and PhyMP, but not the non-phosphorylated alcohols geranylgeraniol and phytol. The tetraprenyl diphosphate must bind to the enzyme as the first substrate and esterification occurs when this pre-loaded enzyme meets the second substrate, chlorophyllide. The polypeptide is Chlorophyll synthase, chloroplastic (CHLG) (Avena sativa (Oat)).